A 1374-amino-acid chain; its full sequence is DNA-directed RNA polymerase subunit beta (1374 aa).

Belongs to the RNA polymerase beta chain family. The RNAP catalytic core consists of 2 alpha, 1 beta, 1 beta' and 1 omega subunit. When a sigma factor is associated with the core the holoenzyme is formed, which can initiate transcription.

It carries out the reaction RNA(n) + a ribonucleoside 5'-triphosphate = RNA(n+1) + diphosphate. Functionally, DNA-dependent RNA polymerase catalyzes the transcription of DNA into RNA using the four ribonucleoside triphosphates as substrates. The chain is DNA-directed RNA polymerase subunit beta from Acidovorax sp. (strain JS42).